Reading from the N-terminus, the 279-residue chain is Large ribosomal subunit protein uL2 (279 aa).

A disordered region spans residues 224-279 (AMNAVDHPMGGGRGHSKGGNIPRSPWNQPSRGLKTRPKKSWDWMIVSDRRKNKAGK).

It belongs to the universal ribosomal protein uL2 family. In terms of assembly, part of the 50S ribosomal subunit. Forms a bridge to the 30S subunit in the 70S ribosome.

Functionally, one of the primary rRNA binding proteins. Required for association of the 30S and 50S subunits to form the 70S ribosome, for tRNA binding and peptide bond formation. It has been suggested to have peptidyltransferase activity; this is somewhat controversial. Makes several contacts with the 16S rRNA in the 70S ribosome. This is Large ribosomal subunit protein uL2 from Elusimicrobium minutum (strain Pei191).